Reading from the N-terminus, the 205-residue chain is Cytochrome c biogenesis ATP-binding export protein CcmA (205 aa).

In terms of domain architecture, ABC transporter spans 2-204; sequence LEVSNLTAIR…SPKLRKIKLG (203 aa). 34–41 is an ATP binding site; that stretch reads GRNGTGKT.

Belongs to the ABC transporter superfamily. CcmA exporter (TC 3.A.1.107) family. The complex is composed of two ATP-binding proteins (CcmA) and two transmembrane proteins (CcmB).

The protein resides in the cell inner membrane. It carries out the reaction heme b(in) + ATP + H2O = heme b(out) + ADP + phosphate + H(+). In terms of biological role, part of the ABC transporter complex CcmAB involved in the biogenesis of c-type cytochromes; once thought to export heme, this seems not to be the case, but its exact role is uncertain. Responsible for energy coupling to the transport system. The sequence is that of Cytochrome c biogenesis ATP-binding export protein CcmA from Vibrio vulnificus (strain CMCP6).